The following is a 100-amino-acid chain: Small ribosomal subunit protein uS14 (100 aa).

The protein belongs to the universal ribosomal protein uS14 family. Part of the 30S ribosomal subunit. Contacts proteins S3 and S10.

Its function is as follows. Binds 16S rRNA, required for the assembly of 30S particles and may also be responsible for determining the conformation of the 16S rRNA at the A site. This chain is Small ribosomal subunit protein uS14, found in Nostoc sp. (strain PCC 7120 / SAG 25.82 / UTEX 2576).